The following is a 552-amino-acid chain: Urocanate hydratase (552 aa).

Residues 49-50, glutamine 127, 173-175, aspartate 193, 239-240, 260-264, 270-271, and tyrosine 319 each bind NAD(+); these read GG, GMG, NA, QTSAH, and YI. The active site involves cysteine 407. Glycine 489 lines the NAD(+) pocket.

Belongs to the urocanase family. It depends on NAD(+) as a cofactor.

It localises to the cytoplasm. The enzyme catalyses 4-imidazolone-5-propanoate = trans-urocanate + H2O. It functions in the pathway amino-acid degradation; L-histidine degradation into L-glutamate; N-formimidoyl-L-glutamate from L-histidine: step 2/3. Catalyzes the conversion of urocanate to 4-imidazolone-5-propionate. The sequence is that of Urocanate hydratase from Bacillus cereus (strain ATCC 14579 / DSM 31 / CCUG 7414 / JCM 2152 / NBRC 15305 / NCIMB 9373 / NCTC 2599 / NRRL B-3711).